The sequence spans 250 residues: LOB domain-containing protein 37 (250 aa).

An LOB domain is found at 1 to 107 (MSCNGCRVLR…VETVLRGGSL (107 aa)). Residues 145 to 227 (DSTDRNIYHH…DSGTTTTTTA (83 aa)) are disordered. The segment covering 157-170 (FSSSRSRSTMDSSS) has biased composition (low complexity).

Belongs to the LOB domain-containing protein family. Expressed in young shoots, roots, stems, leaves and flowers.

This chain is LOB domain-containing protein 37 (LBD37), found in Arabidopsis thaliana (Mouse-ear cress).